Here is a 143-residue protein sequence, read N- to C-terminus: Hemoglobin subunit alpha (143 aa).

Residues 2–143 (SLTARDKSVV…LSAALADKYR (142 aa)) enclose the Globin domain. O2 is bound at residue histidine 60. Histidine 89 contacts heme b.

Belongs to the globin family. In terms of assembly, heterotetramer of two alpha chains and two beta chains. Red blood cells.

Involved in oxygen transport from gills to the various peripheral tissues. In Salmo salar (Atlantic salmon), this protein is Hemoglobin subunit alpha (hba).